A 168-amino-acid polypeptide reads, in one-letter code: Sperm acrosome-associated protein 9 (168 aa).

Microtubule inner protein component of sperm flagellar doublet microtubules. Interacts with CABP1 and CALR. Interacts with INCA1. Interacts with microtubules. In terms of tissue distribution, testis-specific. Expressed in round spermatids.

The protein resides in the cytoplasm. The protein localises to the cytoplasmic vesicle. It localises to the secretory vesicle. It is found in the acrosome. Its subcellular location is the cytoskeleton. The protein resides in the cilium basal body. The protein localises to the flagellum axoneme. It localises to the cilium axoneme. It is found in the nucleus. Microtubule inner protein (MIP) part of the dynein-decorated doublet microtubules (DMTs) of multiciliated respiratory cells and the distal singlet microtubules of monoflagellated spermatozoa. Forms an extensive interaction network cross-linking the lumen of axonemal doublet microtubules. The protein is Sperm acrosome-associated protein 9 (Spaca9) of Rattus norvegicus (Rat).